Consider the following 306-residue polypeptide: UDP-N-acetylenolpyruvoylglucosamine reductase (306 aa).

Residues 33–197 (TGGEADFYLS…LEAAFTLEPG (165 aa)) form the FAD-binding PCMH-type domain. Residue Arg-176 is part of the active site. Residue Ser-226 is the Proton donor of the active site. Glu-296 is a catalytic residue.

Belongs to the MurB family. The cofactor is FAD.

Its subcellular location is the cytoplasm. The catalysed reaction is UDP-N-acetyl-alpha-D-muramate + NADP(+) = UDP-N-acetyl-3-O-(1-carboxyvinyl)-alpha-D-glucosamine + NADPH + H(+). The protein operates within cell wall biogenesis; peptidoglycan biosynthesis. Functionally, cell wall formation. This is UDP-N-acetylenolpyruvoylglucosamine reductase from Staphylococcus epidermidis (strain ATCC 35984 / DSM 28319 / BCRC 17069 / CCUG 31568 / BM 3577 / RP62A).